Consider the following 615-residue polypeptide: Crinkler effector protein 15 (615 aa).

Residues 1–17 (MVKLVCAIVGVAGSAFP) form the signal peptide. Positions 18–54 (VDIDASQLVGDLKKAIKAENAMTFTGDAKDLQLFLAK) are LQLFLAK domain. The segment at 55-136 (QPVDDESGKE…NMELPSSEQI (82 aa)) is DWL domain. Positions 137-143 (HVLVVVP) match the HVLVXXP motif motif. Asn-531 carries an N-linked (GlcNAc...) asparagine glycan.

Belongs to the Crinkler effector family.

Its subcellular location is the secreted. It localises to the host nucleus. Functionally, secreted effector that elicits necrosis in host plants, a characteristic of plant innate immunity. This chain is Crinkler effector protein 15, found in Phytophthora infestans (Potato late blight agent).